Reading from the N-terminus, the 205-residue chain is MECMASTEESLPASSSMDSCSGELPTTTTTAPAQSTASSGCRPPATAAKRRSLISTDLRLGLTLSSVVHIDGNNPSTPRSSLTTATVTADRGGGGGGHGRRRSLFVKVYMEGVPIGRKLDLLPLDGYKGLVARLASMFRASITYHHCHRQFAVVGMKTNKVHHVLTYEDQEGDWMMAGDVPWELFLTSVKRLRIARADDKYCYSC.

The disordered stretch occupies residues 1–48 (MECMASTEESLPASSSMDSCSGELPTTTTTAPAQSTASSGCRPPATAA). Over residues 7–19 (TEESLPASSSMDS) the composition is skewed to polar residues. Over residues 25–39 (PTTTTTAPAQSTASS) the composition is skewed to low complexity. An EAR-like (transcriptional repression) motif is present at residues 58 to 62 (LRLGL). Positions 71–98 (DGNNPSTPRSSLTTATVTADRGGGGGGH) are disordered. A compositionally biased stretch (polar residues) spans 73–87 (NNPSTPRSSLTTATV). A PB1 domain is found at 103 to 199 (SLFVKVYMEG…KRLRIARADD (97 aa)).

The protein belongs to the Aux/IAA family. Homodimers and heterodimers. As to expression, highly expressed in green shoots. Expressed in flowers.

It localises to the nucleus. Its function is as follows. Aux/IAA proteins are short-lived transcriptional factors that function as repressors of early auxin response genes at low auxin concentrations. The sequence is that of Auxin-responsive protein IAA8 (IAA8) from Oryza sativa subsp. japonica (Rice).